Consider the following 98-residue polypeptide: NADH-ubiquinone oxidoreductase chain 4L (98 aa).

A run of 3 helical transmembrane segments spans residues 1-21 (MHYIYINIIIAFSMSLLGALL), 29-49 (SLLCLEGMMLALFVLSTLIAL), and 61-81 (IILLVFAACEAAIGLSLLVMV).

The protein belongs to the complex I subunit 4L family. Core subunit of respiratory chain NADH dehydrogenase (Complex I) which is composed of 45 different subunits.

The protein resides in the mitochondrion inner membrane. It carries out the reaction a ubiquinone + NADH + 5 H(+)(in) = a ubiquinol + NAD(+) + 4 H(+)(out). Its function is as follows. Core subunit of the mitochondrial membrane respiratory chain NADH dehydrogenase (Complex I) which catalyzes electron transfer from NADH through the respiratory chain, using ubiquinone as an electron acceptor. Part of the enzyme membrane arm which is embedded in the lipid bilayer and involved in proton translocation. The protein is NADH-ubiquinone oxidoreductase chain 4L (MT-ND4L) of Procavia capensis (Rock hyrax).